We begin with the raw amino-acid sequence, 46 residues long: RECRSQSKQFVGLCVSDTNCASVCLTEHFPGGKCDGYRRCFCTKDC.

Disulfide bonds link Cys-3-Cys-46, Cys-14-Cys-34, Cys-20-Cys-40, and Cys-24-Cys-42.

Its function is as follows. Plant defense peptide. This Triticum kiharae (Wheat) protein is Defensin Tk-AMP-D6.1.